We begin with the raw amino-acid sequence, 266 residues long: MADYTNYTNKEMQAVTIAKQIKNGQVVTVGTGLPLIGASVAKRVYAPDCHIIVESGLMDCSPVEVPRSVGDLRFMAHCGCIWPNVRFVGFEINEYLHKANRLIAFIGGAQIDPYGNVNSTSIGDYHHPKTRFTGSGGANGIATYSNTIIMMQHEKRRFMNKIDYVTSPGWIDGPGGRERLGLPGDVGPQLVVTDKGILKFDEKTKRMYLAAYYPTSSPEDVLENTGFDLDVSKAVELEAPDPAVIKLIREEIDPGQAFIQVPTEAK.

The active site involves E54.

It belongs to the 3-oxoacid CoA-transferase subunit B family. As to quaternary structure, heterooctamer of four A and four B subunits.

The protein resides in the cytoplasm. The enzyme catalyses trans-glutaconate + acetyl-CoA = (2E)-glutaconyl-CoA + acetate. It participates in amino-acid degradation; L-glutamate degradation via hydroxyglutarate pathway; crotonoyl-CoA from L-glutamate: step 3/5. Catalyzes the transfer of the CoA moiety from acetyl-CoA to (R)-2-hydroxyglutarate and related compounds like glutaconate. The protein is Glutaconate CoA-transferase subunit B (gctB) of Acidaminococcus fermentans (strain ATCC 25085 / DSM 20731 / CCUG 9996 / CIP 106432 / VR4).